The sequence spans 705 residues: Polyphosphate kinase (705 aa).

ATP is bound at residue Asn58. 2 residues coordinate Mg(2+): Arg389 and Arg419. Catalysis depends on His449, which acts as the Phosphohistidine intermediate. 3 residues coordinate ATP: Tyr482, Arg578, and His606.

It belongs to the polyphosphate kinase 1 (PPK1) family. Mg(2+) serves as cofactor. An intermediate of this reaction is the autophosphorylated ppk in which a phosphate is covalently linked to a histidine residue through a N-P bond.

The catalysed reaction is [phosphate](n) + ATP = [phosphate](n+1) + ADP. Functionally, catalyzes the reversible transfer of the terminal phosphate of ATP to form a long-chain polyphosphate (polyP). The chain is Polyphosphate kinase from Halalkalibacterium halodurans (strain ATCC BAA-125 / DSM 18197 / FERM 7344 / JCM 9153 / C-125) (Bacillus halodurans).